Reading from the N-terminus, the 145-residue chain is Small ribosomal subunit protein eS19 (145 aa).

Residues 120–145 (GGRRISENGQRDLDRIAAQTLEEDDE) form a disordered region. Positions 123–134 (RISENGQRDLDR) are enriched in basic and acidic residues.

The protein belongs to the eukaryotic ribosomal protein eS19 family. In terms of assembly, component of the small ribosomal subunit. Mature ribosomes consist of a small (40S) and a large (60S) subunit. The 40S subunit contains about 32 different proteins and 1 molecule of RNA (18S). The 60S subunit contains 45 different proteins and 3 molecules of RNA (25S, 5.8S and 5S).

The protein localises to the cytoplasm. Its function is as follows. Component of the ribosome, a large ribonucleoprotein complex responsible for the synthesis of proteins in the cell. The small ribosomal subunit (SSU) binds messenger RNAs (mRNAs) and translates the encoded message by selecting cognate aminoacyl-transfer RNA (tRNA) molecules. The large subunit (LSU) contains the ribosomal catalytic site termed the peptidyl transferase center (PTC), which catalyzes the formation of peptide bonds, thereby polymerizing the amino acids delivered by tRNAs into a polypeptide chain. The nascent polypeptides leave the ribosome through a tunnel in the LSU and interact with protein factors that function in enzymatic processing, targeting, and the membrane insertion of nascent chains at the exit of the ribosomal tunnel. RPS19A is required for proper maturation of the small (40S) ribosomal subunit. This Candida albicans (strain SC5314 / ATCC MYA-2876) (Yeast) protein is Small ribosomal subunit protein eS19 (RPS19A).